Consider the following 465-residue polypeptide: Mothers against decapentaplegic homolog 5 (465 aa).

Threonine 2 bears the N-acetylthreonine mark. Residues 13-137 (PAVKRLLGWK…YKRVESPVLP (125 aa)) enclose the MH1 domain. Cysteine 65, cysteine 110, cysteine 122, and histidine 127 together coordinate Zn(2+). The disordered stretch occupies residues 163–251 (NEPHMPQNAT…DTSSNMIPQT (89 aa)). A compositionally biased stretch (polar residues) spans 169 to 182 (QNATFPDSFHQPNN). Pro residues predominate over residues 186–197 (PLSPNSPYPPSP). The span at 198-214 (ASSTYPNSPASSGPGSP) shows a compositional bias: low complexity. Positions 237-251 (NSQPMDTSSNMIPQT) are enriched in polar residues. Residues 271 to 465 (WCSIVYYELN…SPLNPISSVS (195 aa)) form the MH2 domain. Residues serine 463 and serine 465 each carry the phosphoserine modification.

This sequence belongs to the dwarfin/SMAD family. In terms of assembly, homodimer. Forms trimers with the co-SMAD SMAD4. Interacts with PEBP2-alpha subunit and SMURF1. Interacts with SUV39H1 and SUV39H2. Interacts (via MH2 domain) with LEMD3. Interacts with WWP1. Interacts with TMEM119. Interacts with ZNF8. Interacts with RANBP3L. Interacts with HK1. Interacts with HGS; this interaction attenuates BMP signaling. Post-translationally, phosphorylated on serine by BMP (bone morphogenetic proteins) type 1 receptor kinase. In terms of processing, ubiquitin-mediated proteolysis by SMAD-specific E3 ubiquitin ligase SMURF1. In terms of tissue distribution, predominantly expressed in mesenchyme and somites during embryogenesis, and present in many tissues of the adult.

The protein localises to the cytoplasm. It is found in the nucleus. It localises to the mitochondrion. Transcriptional regulator that plays a role in various cellular processes including embryonic development, cell differentiation, angiogenesis and tissue homeostasis. Upon BMP ligand binding to their receptors at the cell surface, is phosphorylated by activated type I BMP receptors (BMPRIs) and associates with SMAD4 to form a heteromeric complex which translocates into the nucleus acting as transcription factor. In turn, the hetero-trimeric complex recognizes cis-regulatory elements containing Smad Binding Elements (SBEs) to modulate the outcome of the signaling network. Non-phosphorylated SMAD5 has a cytoplasmic role in energy metabolism regulation by promoting mitochondrial respiration and glycolysis in response to cytoplasmic pH changes. Mechanistically, interacts with hexokinase 1/HK1 and thereby accelerates glycolysis. The protein is Mothers against decapentaplegic homolog 5 (Smad5) of Mus musculus (Mouse).